The sequence spans 218 residues: MNATCTPSLPYDASRLRELAHLLIGTISEFAQAGWTPATSSNFSHRLDEHHVAITVSGRDKRCLREEDIMAVDLDGNAVGHPHTPSAETLLHTQLYRRFPEIGCVLHTHSLTQTVASRVYAGAGHISLKDYELLKAFAGHSTHETTLDVPVFCNTQNMNILAAQVDTLLDKQRMWGYLINGHGMYTWGNTLADARRHLEALEFLLHCELDLLKLRGYL.

H107 and H109 together coordinate Zn(2+).

It belongs to the aldolase class II family. MtnB subfamily. Zn(2+) serves as cofactor.

It carries out the reaction 5-(methylsulfanyl)-D-ribulose 1-phosphate = 5-methylsulfanyl-2,3-dioxopentyl phosphate + H2O. Its pathway is amino-acid biosynthesis; L-methionine biosynthesis via salvage pathway; L-methionine from S-methyl-5-thio-alpha-D-ribose 1-phosphate: step 2/6. Catalyzes the dehydration of methylthioribulose-1-phosphate (MTRu-1-P) into 2,3-diketo-5-methylthiopentyl-1-phosphate (DK-MTP-1-P). This Xylella fastidiosa (strain Temecula1 / ATCC 700964) protein is Methylthioribulose-1-phosphate dehydratase.